The sequence spans 185 residues: Pro-adrenomedullin (185 aa).

A signal peptide spans 1 to 21 (MKLVSVALMYLGSLAFLGADT). Arg-41 is modified (arginine amide). Positions 45-92 (ELRMSSSYPTGLADVKAGPAQTLIRPQDMKGASRSPEDSSPDAARIRV) are excised as a propeptide. The disordered stretch occupies residues 60–87 (KAGPAQTLIRPQDMKGASRSPEDSSPDA). A disulfide bond links Cys-110 and Cys-115. The segment at 133–185 (DNVAPRSKISPQGYGRRRRRSLPEAGPGRTLVSSKPQAHGAPAPPSGSAPHFL) is disordered. Tyrosine amide is present on Tyr-146. Positions 148–185 (RRRRRSLPEAGPGRTLVSSKPQAHGAPAPPSGSAPHFL) are cleaved as a propeptide — preproAM C-terminal fragment.

Belongs to the adrenomedullin family. As to expression, highest levels found in pheochromocytoma and adrenal medulla. Also found in lung, ventricle and kidney tissues.

It is found in the secreted. In terms of biological role, adrenomedullin/ADM and proadrenomedullin N-20 terminal peptide/PAMP are peptide hormones that act as potent hypotensive and vasodilatator agents. Numerous actions have been reported most related to the physiologic control of fluid and electrolyte homeostasis. In the kidney, ADM is diuretic and natriuretic, and both ADM and PAMP inhibit aldosterone secretion by direct adrenal actions. In pituitary gland, both peptides at physiologically relevant doses inhibit basal ACTH secretion. Both peptides appear to act in brain and pituitary gland to facilitate the loss of plasma volume, actions which complement their hypotensive effects in blood vessels. ADM function is mediated by the CALCRL-RAMP2 and CALCRL-RAMP3 receptor complexes with ADM showing the highest potency for the CALCRL-RAMP2 complex. The chain is Pro-adrenomedullin from Homo sapiens (Human).